A 641-amino-acid polypeptide reads, in one-letter code: ATP-dependent zinc metalloprotease FtsH (641 aa).

The Cytoplasmic portion of the chain corresponds to 1–16; it reads MNKQQKPKRSPLRPDY. The helical transmembrane segment at 17–37 threads the bilayer; the sequence is LVIVIIILLAIGMYFFFTEMM. The Extracellular segment spans residues 38–131; sequence APKVKQFDEF…VSFVPHVSVD (94 aa). The chain crosses the membrane as a helical span at residues 132–152; sequence FWNIISTLLLIAAPIVLVVIM. Topologically, residues 153–641 are cytoplasmic; that stretch reads FRSMSSQSNK…EVEEDSKKSE (489 aa). 222 to 229 lines the ATP pocket; that stretch reads GQPGTGKT. Position 444 (H444) interacts with Zn(2+). E445 is an active-site residue. Residues H448 and D520 each contribute to the Zn(2+) site.

In the central section; belongs to the AAA ATPase family. The protein in the C-terminal section; belongs to the peptidase M41 family. Homohexamer. It depends on Zn(2+) as a cofactor.

It localises to the cell membrane. Acts as a processive, ATP-dependent zinc metallopeptidase for both cytoplasmic and membrane proteins. Plays a role in the quality control of integral membrane proteins. In Acholeplasma laidlawii (strain PG-8A), this protein is ATP-dependent zinc metalloprotease FtsH.